The sequence spans 398 residues: 4-hydroxy-3-methylbut-2-enyl diphosphate reductase (398 aa).

Cys-66 is a [4Fe-4S] cluster binding site. His-96 contributes to the (2E)-4-hydroxy-3-methylbut-2-enyl diphosphate binding site. His-96 provides a ligand contact to dimethylallyl diphosphate. Residue His-96 coordinates isopentenyl diphosphate. [4Fe-4S] cluster is bound at residue Cys-157. His-185 lines the (2E)-4-hydroxy-3-methylbut-2-enyl diphosphate pocket. Dimethylallyl diphosphate is bound at residue His-185. Residue His-185 coordinates isopentenyl diphosphate. The Proton donor role is filled by Glu-187. Thr-250 serves as a coordination point for (2E)-4-hydroxy-3-methylbut-2-enyl diphosphate. Cys-288 contacts [4Fe-4S] cluster. Residues Ser-317, Ser-318, Asn-319, and Ser-380 each coordinate (2E)-4-hydroxy-3-methylbut-2-enyl diphosphate. Positions 317, 318, 319, and 380 each coordinate dimethylallyl diphosphate. 4 residues coordinate isopentenyl diphosphate: Ser-317, Ser-318, Asn-319, and Ser-380.

This sequence belongs to the IspH family. [4Fe-4S] cluster serves as cofactor.

The catalysed reaction is isopentenyl diphosphate + 2 oxidized [2Fe-2S]-[ferredoxin] + H2O = (2E)-4-hydroxy-3-methylbut-2-enyl diphosphate + 2 reduced [2Fe-2S]-[ferredoxin] + 2 H(+). The enzyme catalyses dimethylallyl diphosphate + 2 oxidized [2Fe-2S]-[ferredoxin] + H2O = (2E)-4-hydroxy-3-methylbut-2-enyl diphosphate + 2 reduced [2Fe-2S]-[ferredoxin] + 2 H(+). The protein operates within isoprenoid biosynthesis; dimethylallyl diphosphate biosynthesis; dimethylallyl diphosphate from (2E)-4-hydroxy-3-methylbutenyl diphosphate: step 1/1. It participates in isoprenoid biosynthesis; isopentenyl diphosphate biosynthesis via DXP pathway; isopentenyl diphosphate from 1-deoxy-D-xylulose 5-phosphate: step 6/6. Its function is as follows. Catalyzes the conversion of 1-hydroxy-2-methyl-2-(E)-butenyl 4-diphosphate (HMBPP) into a mixture of isopentenyl diphosphate (IPP) and dimethylallyl diphosphate (DMAPP). Acts in the terminal step of the DOXP/MEP pathway for isoprenoid precursor biosynthesis. In Prochlorococcus marinus subsp. pastoris (strain CCMP1986 / NIES-2087 / MED4), this protein is 4-hydroxy-3-methylbut-2-enyl diphosphate reductase.